A 392-amino-acid chain; its full sequence is ATP phosphoribosyltransferase regulatory subunit (392 aa).

The protein belongs to the class-II aminoacyl-tRNA synthetase family. HisZ subfamily. As to quaternary structure, heteromultimer composed of HisG and HisZ subunits.

The protein resides in the cytoplasm. The protein operates within amino-acid biosynthesis; L-histidine biosynthesis; L-histidine from 5-phospho-alpha-D-ribose 1-diphosphate: step 1/9. Functionally, required for the first step of histidine biosynthesis. May allow the feedback regulation of ATP phosphoribosyltransferase activity by histidine. The protein is ATP phosphoribosyltransferase regulatory subunit of Marinomonas sp. (strain MWYL1).